A 245-amino-acid chain; its full sequence is Adapter protein MecA (245 aa).

Belongs to the MecA family. In terms of assembly, homodimer.

In terms of biological role, enables the recognition and targeting of unfolded and aggregated proteins to the ClpC protease or to other proteins involved in proteolysis. In Streptococcus pneumoniae (strain ATCC BAA-255 / R6), this protein is Adapter protein MecA.